A 143-amino-acid polypeptide reads, in one-letter code: Large-conductance mechanosensitive channel (143 aa).

The next 3 membrane-spanning stretches (helical) occupy residues 10 to 30 (FAVKGNVIDLAVGVIIGGAFG), 40 to 60 (VIMPIVGLVFGRLDFSNLFLV), and 86 to 106 (GSFITVAVNFLILAFIIFMMV).

It belongs to the MscL family. In terms of assembly, homopentamer.

It localises to the cell inner membrane. In terms of biological role, channel that opens in response to stretch forces in the membrane lipid bilayer. May participate in the regulation of osmotic pressure changes within the cell. The sequence is that of Large-conductance mechanosensitive channel from Paracidovorax citrulli (strain AAC00-1) (Acidovorax citrulli).